A 232-amino-acid chain; its full sequence is Ribose-5-phosphate isomerase A (232 aa).

Substrate contacts are provided by residues 31–34 (TGST), 87–90 (DGAD), and 100–103 (KGGG). E109 (proton acceptor) is an active-site residue. Substrate is bound at residue K127.

It belongs to the ribose 5-phosphate isomerase family. In terms of assembly, homodimer.

The enzyme catalyses aldehydo-D-ribose 5-phosphate = D-ribulose 5-phosphate. It participates in carbohydrate degradation; pentose phosphate pathway; D-ribose 5-phosphate from D-ribulose 5-phosphate (non-oxidative stage): step 1/1. Catalyzes the reversible conversion of ribose-5-phosphate to ribulose 5-phosphate. In Bifidobacterium longum (strain DJO10A), this protein is Ribose-5-phosphate isomerase A.